A 347-amino-acid chain; its full sequence is S-adenosylmethionine:tRNA ribosyltransferase-isomerase (347 aa).

This sequence belongs to the QueA family. In terms of assembly, monomer.

The protein localises to the cytoplasm. The catalysed reaction is 7-aminomethyl-7-carbaguanosine(34) in tRNA + S-adenosyl-L-methionine = epoxyqueuosine(34) in tRNA + adenine + L-methionine + 2 H(+). Its pathway is tRNA modification; tRNA-queuosine biosynthesis. Functionally, transfers and isomerizes the ribose moiety from AdoMet to the 7-aminomethyl group of 7-deazaguanine (preQ1-tRNA) to give epoxyqueuosine (oQ-tRNA). The sequence is that of S-adenosylmethionine:tRNA ribosyltransferase-isomerase from Xylella fastidiosa (strain M12).